The following is an 89-amino-acid chain: Cell division topological specificity factor (89 aa).

The protein belongs to the MinE family.

Prevents the cell division inhibition by proteins MinC and MinD at internal division sites while permitting inhibition at polar sites. This ensures cell division at the proper site by restricting the formation of a division septum at the midpoint of the long axis of the cell. In Proteus mirabilis (strain HI4320), this protein is Cell division topological specificity factor.